We begin with the raw amino-acid sequence, 383 residues long: Pheromone-regulated membrane protein 10 (383 aa).

Topologically, residues 1–65 (MIVSFGDATT…ILADTNLYPP (65 aa)) are cytoplasmic. The helical transmembrane segment at 66–86 (WMCVLLYAFCSAMVTPYAFGG) threads the bilayer. A topological domain (extracellular) is located at residue D87. Residues 88-108 (WVNLAISFFMGLCVGSLQFIL) traverse the membrane as a helical segment. The Cytoplasmic segment spans residues 109 to 117 (SQKSYMYSN). A helical transmembrane segment spans residues 118–138 (VFEISASIVVSFCGRAFGSIP). Topologically, residues 139–141 (RSH) are extracellular. A helical transmembrane segment spans residues 142-162 (ICFGAVTQGSLALILPGYIIL). At 163 to 180 (CGALELQSRSLVAGAVRM) the chain is on the cytoplasmic side. A helical transmembrane segment spans residues 181 to 201 (FYAIIYSLFLGFGITLGSALF). Topologically, residues 202–216 (GWMYHNATNEISCPQ) are extracellular. Residues 217–237 (LISPWFRFLFVPAFTISISLL) form a helical membrane-spanning segment. Topologically, residues 238–241 (NQAH) are cytoplasmic. A helical transmembrane segment spans residues 242-262 (ISQLPVMVFISCTGYVVTYWA). At 263–271 (GKHFANSTE) the chain is on the extracellular side. Residues 272 to 292 (FTAALAAFVIGVLGNLYSRIW) traverse the membrane as a helical segment. Position 293 (K293) is a topological domain, cytoplasmic. A helical membrane pass occupies residues 294–314 (GLAVSAMLPAIFVQVPSGIAS). The Extracellular portion of the chain corresponds to 315–352 (QNSLLSGLQSANTIVNANETITTSTSDPSSSMSFGMTM). Residues 353 to 373 (IQVCVGISVGLFASSLFVYPF) traverse the membrane as a helical segment. Residues 374 to 383 (GKKKTGLFSL) are Cytoplasmic-facing.

It belongs to the ThrE exporter (TC 2.A.79) family.

It is found in the membrane. This Saccharomyces cerevisiae (strain ATCC 204508 / S288c) (Baker's yeast) protein is Pheromone-regulated membrane protein 10 (PRM10).